The chain runs to 360 residues: Phosphoserine aminotransferase (360 aa).

Position 43 (arginine 43) interacts with L-glutamate. Pyridoxal 5'-phosphate-binding positions include 77–78 (AS), tryptophan 103, threonine 152, aspartate 172, and glutamine 195. Position 196 is an N6-(pyridoxal phosphate)lysine (lysine 196). 237 to 238 (NT) provides a ligand contact to pyridoxal 5'-phosphate.

This sequence belongs to the class-V pyridoxal-phosphate-dependent aminotransferase family. SerC subfamily. As to quaternary structure, homodimer. Pyridoxal 5'-phosphate serves as cofactor.

It localises to the cytoplasm. It catalyses the reaction O-phospho-L-serine + 2-oxoglutarate = 3-phosphooxypyruvate + L-glutamate. It carries out the reaction 4-(phosphooxy)-L-threonine + 2-oxoglutarate = (R)-3-hydroxy-2-oxo-4-phosphooxybutanoate + L-glutamate. Its pathway is amino-acid biosynthesis; L-serine biosynthesis; L-serine from 3-phospho-D-glycerate: step 2/3. It functions in the pathway cofactor biosynthesis; pyridoxine 5'-phosphate biosynthesis; pyridoxine 5'-phosphate from D-erythrose 4-phosphate: step 3/5. Catalyzes the reversible conversion of 3-phosphohydroxypyruvate to phosphoserine and of 3-hydroxy-2-oxo-4-phosphonooxybutanoate to phosphohydroxythreonine. This Syntrophobacter fumaroxidans (strain DSM 10017 / MPOB) protein is Phosphoserine aminotransferase.